We begin with the raw amino-acid sequence, 143 residues long: Monothiol glutaredoxin-5, mitochondrial (143 aa).

The transit peptide at 1-28 directs the protein to the mitochondrion; the sequence is MFGRISTRALLRPAFTHRIPSVSLSRFL. The Glutaredoxin domain maps to 33 to 138; it reads KQAIESAIES…KLLEDADALV (106 aa). Lys-50 is a binding site for glutathione. Position 58 (Cys-58) interacts with [2Fe-2S] cluster. Glutathione is bound by residues 90–94, Ile-102, and 115–116; these read REGVK and CD.

The protein belongs to the glutaredoxin family. Monothiol subfamily. In terms of assembly, homodimer.

The protein localises to the mitochondrion matrix. Its function is as follows. Monothiol glutaredoxin involved in mitochondrial iron-sulfur (Fe/S) cluster transfer. Receives iron-sulfur clusters from scaffold protein ISU1 and mediates their transfer to apoproteins, to the 4Fe/FS cluster biosynthesis machinery, or export from mitochondrion. The chain is Monothiol glutaredoxin-5, mitochondrial (GRX5) from Lachancea kluyveri (Yeast).